The primary structure comprises 193 residues: Large ribosomal subunit protein eL19A (193 aa).

Residues Q156–E179 are disordered. The span at A164–A174 shows a compositional bias: basic residues.

It belongs to the eukaryotic ribosomal protein eL19 family. In terms of assembly, component of the large ribosomal subunit (LSU). Mature yeast ribosomes consist of a small (40S) and a large (60S) subunit. The 40S small subunit contains 1 molecule of ribosomal RNA (18S rRNA) and at least 33 different proteins. The large 60S subunit contains 3 rRNA molecules (25S, 5.8S and 5S rRNA) and at least 46 different proteins. eL19 lies in close proximity to the binding site for eukaryotic initiation factor eIF4G.

It is found in the cytoplasm. Functionally, component of the ribosome, a large ribonucleoprotein complex responsible for the synthesis of proteins in the cell. The small ribosomal subunit (SSU) binds messenger RNAs (mRNAs) and translates the encoded message by selecting cognate aminoacyl-transfer RNA (tRNA) molecules. The large subunit (LSU) contains the ribosomal catalytic site termed the peptidyl transferase center (PTC), which catalyzes the formation of peptide bonds, thereby polymerizing the amino acids delivered by tRNAs into a polypeptide chain. The nascent polypeptides leave the ribosome through a tunnel in the LSU and interact with protein factors that function in enzymatic processing, targeting, and the membrane insertion of nascent chains at the exit of the ribosomal tunnel. eL19 may play a role in the last stages of translation initiation, in particular subunit joining and shedding/releasing factors. In Schizosaccharomyces pombe (strain 972 / ATCC 24843) (Fission yeast), this protein is Large ribosomal subunit protein eL19A (rpl1901).